We begin with the raw amino-acid sequence, 510 residues long: D-alanine--D-alanyl carrier protein ligase (510 aa).

157-158 lines the ATP pocket; the sequence is TS. Asp202 contacts D-alanine. An ATP-binding site is contributed by 297-302; sequence NTYGPT. Val306 lines the D-alanine pocket. 2 residues coordinate ATP: Asp389 and Lys498. Lys498 contributes to the D-alanine binding site.

Belongs to the ATP-dependent AMP-binding enzyme family. DltA subfamily.

Its subcellular location is the cytoplasm. The catalysed reaction is holo-[D-alanyl-carrier protein] + D-alanine + ATP = D-alanyl-[D-alanyl-carrier protein] + AMP + diphosphate. The protein operates within cell wall biogenesis; lipoteichoic acid biosynthesis. In terms of biological role, catalyzes the first step in the D-alanylation of lipoteichoic acid (LTA), the activation of D-alanine and its transfer onto the D-alanyl carrier protein (Dcp) DltC. In an ATP-dependent two-step reaction, forms a high energy D-alanyl-AMP intermediate, followed by transfer of the D-alanyl residue as a thiol ester to the phosphopantheinyl prosthetic group of the Dcp. D-alanylation of LTA plays an important role in modulating the properties of the cell wall in Gram-positive bacteria, influencing the net charge of the cell wall. This chain is D-alanine--D-alanyl carrier protein ligase, found in Listeria monocytogenes serotype 4b (strain CLIP80459).